The chain runs to 557 residues: Kelch repeat and BTB domain-containing protein 2 (557 aa).

A BTB domain is found at Cys26–Asn95. The BACK domain maps to Ile143 to Lys223. Kelch repeat units follow at residues Glu305–Asp352, Thr353–Gln399, and Ser415–Asp464.

Interacts (via BTB domain) with host CUL3.

It is found in the host cytoplasm. Its function is as follows. Probable substrate-specific adapter of CUL3-containing E3 ubiquitin-protein ligases which mediate the ubiquitination and subsequent proteasomal degradation of host target proteins. The sequence is that of Kelch repeat and BTB domain-containing protein 2 (KBTB2) from Cowpox virus (strain Brighton Red) (CPV).